A 237-amino-acid chain; its full sequence is Ribosomal RNA small subunit methyltransferase G (237 aa).

Residues Gly78, Phe83, Ala129–Glu130, and Arg148 contribute to the S-adenosyl-L-methionine site. The segment at Lys218–Leu237 is disordered.

Belongs to the methyltransferase superfamily. RNA methyltransferase RsmG family.

It is found in the cytoplasm. Functionally, specifically methylates the N7 position of a guanine in 16S rRNA. The chain is Ribosomal RNA small subunit methyltransferase G from Streptococcus gordonii (strain Challis / ATCC 35105 / BCRC 15272 / CH1 / DL1 / V288).